Consider the following 423-residue polypeptide: CinA-like protein (423 aa).

This sequence belongs to the CinA family.

This chain is CinA-like protein, found in Prochlorococcus marinus (strain SARG / CCMP1375 / SS120).